The primary structure comprises 76 residues: Small ribosomal subunit protein bS18 (76 aa).

The protein belongs to the bacterial ribosomal protein bS18 family. As to quaternary structure, part of the 30S ribosomal subunit. Forms a tight heterodimer with protein bS6.

Binds as a heterodimer with protein bS6 to the central domain of the 16S rRNA, where it helps stabilize the platform of the 30S subunit. In Alcanivorax borkumensis (strain ATCC 700651 / DSM 11573 / NCIMB 13689 / SK2), this protein is Small ribosomal subunit protein bS18.